We begin with the raw amino-acid sequence, 1462 residues long: Gag-Pol polyprotein (1462 aa).

A lipid anchor (N-myristoyl glycine; by host) is attached at glycine 2. The interval 7–31 (VLRGKKADELEKIRLRPGGKKKYRL) is interaction with Gp41. Positions 16-22 (LEKIRLR) match the Nuclear export signal motif. A Nuclear localization signal motif is present at residues 26-32 (KKKYRLK). The tract at residues 191 to 228 (NCVGDHQAAMQIIREIINEEAADWDVQHPIPGPLPAGQ) is interaction with human PPIA/CYPA and NUP153. A dimerization/Multimerization of capsid protein p24 region spans residues 279 to 364 (YNPTNILDIK…GGPGQKARLM (86 aa)). 2 consecutive CCHC-type zinc fingers follow at residues 388–405 (IKCWNCGKEGHSARQCRA) and 409–426 (QGCWKCGKSGHIMANCPD). The segment at 441–507 (APQLPRGPKF…RRDTTQRDDR (67 aa)) is disordered. Over residues 454–468 (NTNSTPNGSSSGPTG) the composition is skewed to low complexity. Basic and acidic residues-rich tracts occupy residues 471-490 (HAAREKTERAETKTIQRSDR) and 497-507 (ARRDTTQRDDR). The segment at 512-516 (PQFSL) is dimerization of protease. A Peptidase A2 domain is found at 531 to 600 (VEVLLDTGAD…TPINIFGRNI (70 aa)). Aspartate 536 functions as the For protease activity; shared with dimeric partner in the catalytic mechanism. Dimerization of protease stretches follow at residues 560–566 (GIGGFIN) and 599–611 (NILTALGMSLNLP). The 191-residue stretch at 654–844 (EGQLEEAPPT…PPYQWMGYEL (191 aa)) folds into the Reverse transcriptase domain. Residues aspartate 720, aspartate 795, and aspartate 796 each contribute to the Mg(2+) site. Residues 837-845 (YQWMGYELW) are RT 'primer grip'. A Tryptophan repeat motif motif is present at residues 1007–1023 (WEQWWDNYWQVTWIPDW). Residues 1043-1166 (IPGAETFYTD…IDHLVSQGIR (124 aa)) enclose the RNase H type-1 domain. Mg(2+) contacts are provided by aspartate 1052, glutamate 1087, aspartate 1107, and aspartate 1158. An Integrase-type zinc finger spans residues 1172–1213 (ERIEPAQEEHGKYHSNVKELAHKFGLPNLVARQIVNTCAQCQ). 4 residues coordinate Zn(2+): histidine 1181, histidine 1185, cysteine 1209, and cysteine 1212. Positions 1222 to 1373 (QVNAELGTWQ…TPVERLVNMI (152 aa)) constitute an Integrase catalytic domain. Mg(2+)-binding residues include aspartate 1233, aspartate 1285, and glutamate 1321. A DNA-binding region (integrase-type) is located at residues 1392-1439 (FRVYFREGRNQLWQGPGELLWKGDGAVIVKVGTDIKVIPRRKAKIIRD). Residues 1443 to 1462 (RQEMDSGSHLEGAREDGEMA) form a disordered region.

Homotrimer; further assembles as hexamers of trimers. Interacts with gp41 (via C-terminus). Interacts with host CALM1; this interaction induces a conformational change in the Matrix protein, triggering exposure of the myristate group. Interacts with host AP3D1; this interaction allows the polyprotein trafficking to multivesicular bodies during virus assembly. Part of the pre-integration complex (PIC) which is composed of viral genome, matrix protein, Vpr and integrase. In terms of assembly, homodimer; the homodimer further multimerizes as homohexamers or homopentamers. Interacts with human PPIA/CYPA. Interacts with human NUP153. Interacts with host PDZD8; this interaction stabilizes the capsid. Interacts with monkey TRIM5; this interaction destabilizes the capsid. As to quaternary structure, homodimer, whose active site consists of two apposed aspartic acid residues. Heterodimer of p66 RT and p51 RT (RT p66/p51). Heterodimerization of RT is essential for DNA polymerase activity. The overall folding of the subdomains is similar in p66 RT and p51 RT but the spatial arrangements of the subdomains are dramatically different. In terms of assembly, homotetramer; may further associate as a homohexadecamer. Part of the pre-integration complex (PIC) which is composed of viral genome, matrix protein, Vpr and integrase. Interacts with human SMARCB1/INI1 and human PSIP1/LEDGF isoform 1. Interacts with human KPNA3; this interaction might play a role in nuclear import of the pre-integration complex. Interacts with human NUP153; this interaction might play a role in nuclear import of the pre-integration complex. Mg(2+) is required as a cofactor. In terms of processing, specific enzymatic cleavages by the viral protease yield mature proteins. The protease is released by autocatalytic cleavage. The polyprotein is cleaved during and after budding, this process is termed maturation. Proteolytic cleavage of p66 RT removes the RNase H domain to yield the p51 RT subunit. Nucleocapsid protein p7 might be further cleaved after virus entry.

The protein localises to the host cell membrane. It is found in the host endosome. The protein resides in the host multivesicular body. It localises to the virion membrane. Its subcellular location is the host nucleus. The protein localises to the host cytoplasm. It is found in the virion. It carries out the reaction Endopeptidase for which the P1 residue is preferably hydrophobic.. The enzyme catalyses Endohydrolysis of RNA in RNA/DNA hybrids. Three different cleavage modes: 1. sequence-specific internal cleavage of RNA. Human immunodeficiency virus type 1 and Moloney murine leukemia virus enzymes prefer to cleave the RNA strand one nucleotide away from the RNA-DNA junction. 2. RNA 5'-end directed cleavage 13-19 nucleotides from the RNA end. 3. DNA 3'-end directed cleavage 15-20 nucleotides away from the primer terminus.. It catalyses the reaction 3'-end directed exonucleolytic cleavage of viral RNA-DNA hybrid.. The catalysed reaction is DNA(n) + a 2'-deoxyribonucleoside 5'-triphosphate = DNA(n+1) + diphosphate. With respect to regulation, protease: The viral protease is inhibited by many synthetic protease inhibitors (PIs), such as amprenavir, atazanavir, indinavir, loprinavir, nelfinavir, ritonavir and saquinavir. Use of protease inhibitors in tritherapy regimens permit more ambitious therapeutic strategies. Reverse transcriptase/ribonuclease H: RT can be inhibited either by nucleoside RT inhibitors (NRTIs) or by non nucleoside RT inhibitors (NNRTIs). NRTIs act as chain terminators, whereas NNRTIs inhibit DNA polymerization by binding a small hydrophobic pocket near the RT active site and inducing an allosteric change in this region. Classical NRTIs are abacavir, adefovir (PMEA), didanosine (ddI), lamivudine (3TC), stavudine (d4T), tenofovir (PMPA), zalcitabine (ddC), and zidovudine (AZT). Classical NNRTIs are atevirdine (BHAP U-87201E), delavirdine, efavirenz (DMP-266), emivirine (I-EBU), and nevirapine (BI-RG-587). The tritherapies used as a basic effective treatment of AIDS associate two NRTIs and one NNRTI. In terms of biological role, mediates, with Gag polyprotein, the essential events in virion assembly, including binding the plasma membrane, making the protein-protein interactions necessary to create spherical particles, recruiting the viral Env proteins, and packaging the genomic RNA via direct interactions with the RNA packaging sequence (Psi). Gag-Pol polyprotein may regulate its own translation, by the binding genomic RNA in the 5'-UTR. At low concentration, the polyprotein would promote translation, whereas at high concentration, the polyprotein would encapsidate genomic RNA and then shut off translation. Its function is as follows. Targets the polyprotein to the plasma membrane via a multipartite membrane-binding signal, that includes its myristoylated N-terminus. Matrix protein is part of the pre-integration complex. Implicated in the release from host cell mediated by Vpu. Binds to RNA. Forms the conical core that encapsulates the genomic RNA-nucleocapsid complex in the virion. Most core are conical, with only 7% tubular. The core is constituted by capsid protein hexamer subunits. The core is disassembled soon after virion entry. Host restriction factors such as TRIM5-alpha or TRIMCyp bind retroviral capsids and cause premature capsid disassembly, leading to blocks in reverse transcription. Capsid restriction by TRIM5 is one of the factors which restricts HIV-1 to the human species. Host PIN1 apparently facilitates the virion uncoating. On the other hand, interactions with PDZD8 or CYPA stabilize the capsid. Functionally, encapsulates and protects viral dimeric unspliced genomic RNA (gRNA). Binds these RNAs through its zinc fingers. Acts as a nucleic acid chaperone which is involved in rearangement of nucleic acid secondary structure during gRNA retrotranscription. Also facilitates template switch leading to recombination. As part of the polyprotein, participates in gRNA dimerization, packaging, tRNA incorporation and virion assembly. In terms of biological role, aspartyl protease that mediates proteolytic cleavages of Gag and Gag-Pol polyproteins during or shortly after the release of the virion from the plasma membrane. Cleavages take place as an ordered, step-wise cascade to yield mature proteins. This process is called maturation. Displays maximal activity during the budding process just prior to particle release from the cell. Also cleaves Nef and Vif, probably concomitantly with viral structural proteins on maturation of virus particles. Hydrolyzes host EIF4GI and PABP1 in order to shut off the capped cellular mRNA translation. The resulting inhibition of cellular protein synthesis serves to ensure maximal viral gene expression and to evade host immune response. Its function is as follows. Multifunctional enzyme that converts the viral RNA genome into dsDNA in the cytoplasm, shortly after virus entry into the cell. This enzyme displays a DNA polymerase activity that can copy either DNA or RNA templates, and a ribonuclease H (RNase H) activity that cleaves the RNA strand of RNA-DNA heteroduplexes in a partially processive 3' to 5' endonucleasic mode. Conversion of viral genomic RNA into dsDNA requires many steps. A tRNA(3)-Lys binds to the primer-binding site (PBS) situated at the 5'-end of the viral RNA. RT uses the 3' end of the tRNA primer to perform a short round of RNA-dependent minus-strand DNA synthesis. The reading proceeds through the U5 region and ends after the repeated (R) region which is present at both ends of viral RNA. The portion of the RNA-DNA heteroduplex is digested by the RNase H, resulting in a ssDNA product attached to the tRNA primer. This ssDNA/tRNA hybridizes with the identical R region situated at the 3' end of viral RNA. This template exchange, known as minus-strand DNA strong stop transfer, can be either intra- or intermolecular. RT uses the 3' end of this newly synthesized short ssDNA to perform the RNA-dependent minus-strand DNA synthesis of the whole template. RNase H digests the RNA template except for two polypurine tracts (PPTs) situated at the 5'-end and near the center of the genome. It is not clear if both polymerase and RNase H activities are simultaneous. RNase H probably can proceed both in a polymerase-dependent (RNA cut into small fragments by the same RT performing DNA synthesis) and a polymerase-independent mode (cleavage of remaining RNA fragments by free RTs). Secondly, RT performs DNA-directed plus-strand DNA synthesis using the PPTs that have not been removed by RNase H as primers. PPTs and tRNA primers are then removed by RNase H. The 3' and 5' ssDNA PBS regions hybridize to form a circular dsDNA intermediate. Strand displacement synthesis by RT to the PBS and PPT ends produces a blunt ended, linear dsDNA copy of the viral genome that includes long terminal repeats (LTRs) at both ends. Catalyzes viral DNA integration into the host chromosome, by performing a series of DNA cutting and joining reactions. This enzyme activity takes place after virion entry into a cell and reverse transcription of the RNA genome in dsDNA. The first step in the integration process is 3' processing. This step requires a complex comprising the viral genome, matrix protein, Vpr and integrase. This complex is called the pre-integration complex (PIC). The integrase protein removes 2 nucleotides from each 3' end of the viral DNA, leaving recessed CA OH's at the 3' ends. In the second step, the PIC enters cell nucleus. This process is mediated through integrase and Vpr proteins, and allows the virus to infect a non dividing cell. This ability to enter the nucleus is specific of lentiviruses, other retroviruses cannot and rely on cell division to access cell chromosomes. In the third step, termed strand transfer, the integrase protein joins the previously processed 3' ends to the 5' ends of strands of target cellular DNA at the site of integration. The 5'-ends are produced by integrase-catalyzed staggered cuts, 5 bp apart. A Y-shaped, gapped, recombination intermediate results, with the 5'-ends of the viral DNA strands and the 3' ends of target DNA strands remaining unjoined, flanking a gap of 5 bp. The last step is viral DNA integration into host chromosome. This involves host DNA repair synthesis in which the 5 bp gaps between the unjoined strands are filled in and then ligated. Since this process occurs at both cuts flanking the HIV genome, a 5 bp duplication of host DNA is produced at the ends of HIV-1 integration. Alternatively, Integrase may catalyze the excision of viral DNA just after strand transfer, this is termed disintegration. The sequence is that of Gag-Pol polyprotein (gag-pol) from Human immunodeficiency virus type 2 subtype A (isolate SBLISY) (HIV-2).